The primary structure comprises 201 residues: MELVLKDAQSALEVSETTFGRDFNEALVHQVVVAYAANARQGTRAQKTRAEVVGSGKKPWRQKGTGRARAGTVKGPIWRGGGVTFAAKAQDHSQKVNKKMYRGALKSIFSELVRQDRLIVVESFGVEAPKTKELKAKLAEMNLEDVLIVTPEIDENLFLAARNLYKVDVRDVAGIDPVSLIAFNKVLVTADAVKQIEEMLG.

The tract at residues Q46–G71 is disordered.

Belongs to the universal ribosomal protein uL4 family. In terms of assembly, part of the 50S ribosomal subunit.

Its function is as follows. One of the primary rRNA binding proteins, this protein initially binds near the 5'-end of the 23S rRNA. It is important during the early stages of 50S assembly. It makes multiple contacts with different domains of the 23S rRNA in the assembled 50S subunit and ribosome. Functionally, forms part of the polypeptide exit tunnel. The sequence is that of Large ribosomal subunit protein uL4 from Shewanella woodyi (strain ATCC 51908 / MS32).